The following is a 694-amino-acid chain: Elongation factor G (694 aa).

In terms of domain architecture, tr-type G spans 8–287; the sequence is EDYRNFGIMA…AVVEFLPAPT (280 aa). GTP contacts are provided by residues 17–24, 86–90, and 140–143; these read AHIDAGKT, DTPGH, and NKMD.

It belongs to the TRAFAC class translation factor GTPase superfamily. Classic translation factor GTPase family. EF-G/EF-2 subfamily.

Its subcellular location is the cytoplasm. Functionally, catalyzes the GTP-dependent ribosomal translocation step during translation elongation. During this step, the ribosome changes from the pre-translocational (PRE) to the post-translocational (POST) state as the newly formed A-site-bound peptidyl-tRNA and P-site-bound deacylated tRNA move to the P and E sites, respectively. Catalyzes the coordinated movement of the two tRNA molecules, the mRNA and conformational changes in the ribosome. The protein is Elongation factor G of Brucella melitensis biotype 1 (strain ATCC 23456 / CCUG 17765 / NCTC 10094 / 16M).